A 1268-amino-acid chain; its full sequence is SR-related and CTD-associated factor 8 (1268 aa).

Residues 1–139 (MEAVKTFNSE…PLLDMAAGIP (139 aa)) enclose the CID domain. Position 6 is a phosphothreonine (Thr-6). Residue Lys-18 forms a Glycyl lysine isopeptide (Lys-Gly) (interchain with G-Cter in SUMO1) linkage. Phosphoserine is present on Ser-273. 2 disordered regions span residues 322 to 355 (QQQPQKVTPQDSQEGAFGSEHSASPSQGSSQQHF) and 385 to 469 (EIFE…PVRS). Over residues 342 to 354 (HSASPSQGSSQQH) the composition is skewed to polar residues. Residues 394–443 (VAVRSRSRTHSRSRSRSPRKRRSRSRSGSRKRKHRKRSRSRSRERKRKSS) show a composition bias toward basic residues. Positions 447–461 (SSERRAREREKERQK) are enriched in basic and acidic residues. Positions 477 to 551 (TTLWVGQVDK…KVIKIAWALN (75 aa)) constitute an RRM domain. A Phosphothreonine modification is found at Thr-615. Ser-617 carries the post-translational modification Phosphoserine. The interval 753–808 (AGNVFNPPSKAEPEEKVPHLTEHQIPSGENTRPVIPSDIPSSAPMLAQPPGASNTS) is disordered. Residues 763–774 (AEPEEKVPHLTE) are compositionally biased toward basic and acidic residues. An asymmetric dimethylarginine mark is found at Arg-915, Arg-925, and Arg-936. The tract at residues 947 to 1063 (QRGIPPPSVL…GRDHFGRPPV (117 aa)) is disordered. The span at 961–970 (HPPPRGPFPP) shows a compositional bias: pro residues. Basic and acidic residues-rich tracts occupy residues 1009–1025 (EGDRDYRFPPIETREGI) and 1032–1063 (DVRDVVGRPIDPREGPGRPPLDGRDHFGRPPV). Arg-1071 is subject to Asymmetric dimethylarginine. The disordered stretch occupies residues 1199–1268 (ATSQRKGENV…VVESTETEGT (70 aa)). The segment covering 1249–1262 (GTAAGVESEAVVES) has biased composition (low complexity).

Interacts with POLR2A; via C-terminal heptapeptide repeat domain (CTD) phosphorylated at 'Ser-2' and 'Ser-5'. Identified in a complex with CDC5L and other spliceosomal proteins.

The protein localises to the nucleus. It is found in the nucleus matrix. In terms of biological role, anti-terminator protein required to prevent early mRNA termination during transcription. Together with SCAF4, acts by suppressing the use of early, alternative poly(A) sites, thereby preventing the accumulation of non-functional truncated proteins. Mechanistically, associates with the phosphorylated C-terminal heptapeptide repeat domain (CTD) of the largest RNA polymerase II subunit (POLR2A), and subsequently binds nascent RNA upstream of early polyadenylation sites to prevent premature mRNA transcript cleavage and polyadenylation. Independently of SCAF4, also acts as a positive regulator of transcript elongation. The sequence is that of SR-related and CTD-associated factor 8 from Rattus norvegicus (Rat).